Reading from the N-terminus, the 447-residue chain is Putative FBD-associated F-box protein At1g61330 (447 aa).

The F-box domain maps to 10–57 (KLIKRLSDELVECILSFLPVQSTLQHRVLSKRYRDTWKLSRDLDFSGI). The FBD domain maps to 384-416 (VKIIGYKGHWHELDIVEFFVKNAPSLKRLELQM).

The polypeptide is Putative FBD-associated F-box protein At1g61330 (Arabidopsis thaliana (Mouse-ear cress)).